The chain runs to 431 residues: Serine hydroxymethyltransferase (431 aa).

121 to 123 (AHV) is a (6S)-5,6,7,8-tetrahydrofolate binding site. An N6-(pyridoxal phosphate)lysine modification is found at lysine 227.

This sequence belongs to the SHMT family. In terms of assembly, homodimer. Pyridoxal 5'-phosphate serves as cofactor.

The protein resides in the cytoplasm. It functions in the pathway amino-acid biosynthesis; glycine biosynthesis; glycine from L-serine: step 1/1. In terms of biological role, catalyzes the reversible interconversion of serine and glycine with a modified folate serving as the one-carbon carrier. Also exhibits a pteridine-independent aldolase activity toward beta-hydroxyamino acids, producing glycine and aldehydes, via a retro-aldol mechanism. This is Serine hydroxymethyltransferase from Metallosphaera sedula (strain ATCC 51363 / DSM 5348 / JCM 9185 / NBRC 15509 / TH2).